Reading from the N-terminus, the 106-residue chain is Integration host factor subunit alpha (106 aa).

The protein belongs to the bacterial histone-like protein family. In terms of assembly, heterodimer of an alpha and a beta chain.

Functionally, this protein is one of the two subunits of integration host factor, a specific DNA-binding protein that functions in genetic recombination as well as in transcriptional and translational control. The polypeptide is Integration host factor subunit alpha (Methylobacterium radiotolerans (strain ATCC 27329 / DSM 1819 / JCM 2831 / NBRC 15690 / NCIMB 10815 / 0-1)).